Consider the following 173-residue polypeptide: MTRILGIDPGSQRTGVGIIDVDATGRVSYVHHQPLVLLGADDFPQRMKLLVLGLADLCREYEPQEVAIERVFMARNPDSALKLGQARGAAISAVVLRDLPVHEYAASEIKLAVVGRGGAEKQQVQHMVGLMLNLKIKLQADAADALAVAITHAHVRATANRLGLSARQAWGRK.

Active-site residues include D8, E69, and D141. The Mg(2+) site is built by D8, E69, and D141.

The protein belongs to the RuvC family. As to quaternary structure, homodimer which binds Holliday junction (HJ) DNA. The HJ becomes 2-fold symmetrical on binding to RuvC with unstacked arms; it has a different conformation from HJ DNA in complex with RuvA. In the full resolvosome a probable DNA-RuvA(4)-RuvB(12)-RuvC(2) complex forms which resolves the HJ. Requires Mg(2+) as cofactor.

It is found in the cytoplasm. The catalysed reaction is Endonucleolytic cleavage at a junction such as a reciprocal single-stranded crossover between two homologous DNA duplexes (Holliday junction).. Its function is as follows. The RuvA-RuvB-RuvC complex processes Holliday junction (HJ) DNA during genetic recombination and DNA repair. Endonuclease that resolves HJ intermediates. Cleaves cruciform DNA by making single-stranded nicks across the HJ at symmetrical positions within the homologous arms, yielding a 5'-phosphate and a 3'-hydroxyl group; requires a central core of homology in the junction. The consensus cleavage sequence is 5'-(A/T)TT(C/G)-3'. Cleavage occurs on the 3'-side of the TT dinucleotide at the point of strand exchange. HJ branch migration catalyzed by RuvA-RuvB allows RuvC to scan DNA until it finds its consensus sequence, where it cleaves and resolves the cruciform DNA. In Stenotrophomonas maltophilia (strain K279a), this protein is Crossover junction endodeoxyribonuclease RuvC.